A 491-amino-acid polypeptide reads, in one-letter code: Chromosomal replication initiator protein DnaA (491 aa).

The domain I, interacts with DnaA modulators stretch occupies residues 1–69; sequence MTTWNKCLKK…TIQEFHDGDL (69 aa). The tract at residues 69–154 is domain II; it reads LLIEYSNKKF…KDDQEYSFGL (86 aa). The tract at residues 106–126 is disordered; the sequence is DSEETSLNQEPKKSQKKLSSK. The interval 155–371 is domain III, AAA+ region; it reads PLKEKYVFDS…GALNRVLTTS (217 aa). Glycine 199, glycine 201, lysine 202, and threonine 203 together coordinate ATP. The domain IV, binds dsDNA stretch occupies residues 372 to 491; sequence KFNHKDPTIE…YELLLDKISR (120 aa).

Belongs to the DnaA family. In terms of assembly, oligomerizes as a right-handed, spiral filament on DNA at oriC.

The protein resides in the cytoplasm. Functionally, plays an essential role in the initiation and regulation of chromosomal replication. ATP-DnaA binds to the origin of replication (oriC) to initiate formation of the DNA replication initiation complex once per cell cycle. Binds the DnaA box (a 9 base pair repeat at the origin) and separates the double-stranded (ds)DNA. Forms a right-handed helical filament on oriC DNA; dsDNA binds to the exterior of the filament while single-stranded (ss)DNA is stabiized in the filament's interior. The ATP-DnaA-oriC complex binds and stabilizes one strand of the AT-rich DNA unwinding element (DUE), permitting loading of DNA polymerase. After initiation quickly degrades to an ADP-DnaA complex that is not apt for DNA replication. Binds acidic phospholipids. The polypeptide is Chromosomal replication initiator protein DnaA (Francisella philomiragia subsp. philomiragia (strain ATCC 25017 / CCUG 19701 / FSC 153 / O#319-036)).